A 215-amino-acid polypeptide reads, in one-letter code: 3,4-dihydroxy-2-butanone 4-phosphate synthase (215 aa).

Residues 37–38 (RE), Asp-42, 150–154 (RRGHT), and Glu-175 each bind D-ribulose 5-phosphate. Mg(2+) is bound at residue Glu-38. His-153 serves as a coordination point for Mg(2+).

It belongs to the DHBP synthase family. As to quaternary structure, homodimer. The cofactor is Mg(2+). Mn(2+) is required as a cofactor.

The catalysed reaction is D-ribulose 5-phosphate = (2S)-2-hydroxy-3-oxobutyl phosphate + formate + H(+). The protein operates within cofactor biosynthesis; riboflavin biosynthesis; 2-hydroxy-3-oxobutyl phosphate from D-ribulose 5-phosphate: step 1/1. Functionally, catalyzes the conversion of D-ribulose 5-phosphate to formate and 3,4-dihydroxy-2-butanone 4-phosphate. The polypeptide is 3,4-dihydroxy-2-butanone 4-phosphate synthase (Desulfatibacillum aliphaticivorans).